The chain runs to 392 residues: HCLS1-binding protein 3 (392 aa).

Met-1 carries the post-translational modification N-acetylmethionine. A phosphoserine mark is found at Ser-3, Ser-139, and Ser-194. Residues 19 to 142 (GLDLTVPQHQ…EFLGTRSPGA (124 aa)) enclose the PX domain. 3 disordered regions span residues 138-162 (RSPGAAGLTSRDSSVLDGTDSQTGN), 174-265 (DQVA…PLKL), and 319-364 (GAEP…KPQE). The segment covering 190-201 (DAEESLEEEEAL) has biased composition (acidic residues). Residues 208 to 220 (RSKKPKKHPKVAV) are compositionally biased toward basic residues. Ser-249 is modified (phosphoserine). Positions 325–335 (KPQLKPKPPVA) are enriched in pro residues. Lys-337 bears the N6-acetyllysine mark.

In terms of assembly, binds HCLS1. Interacts with the SH3 domain of HCLS1 in vitro.

May be a modulator of IL-2 signaling. This chain is HCLS1-binding protein 3 (HS1BP3), found in Homo sapiens (Human).